A 151-amino-acid chain; its full sequence is Small ribosomal subunit protein uS15 (151 aa).

Belongs to the universal ribosomal protein uS15 family. As to quaternary structure, component of the small ribosomal subunit.

Its subcellular location is the cytoplasm. Component of the small ribosomal subunit. The ribosome is a large ribonucleoprotein complex responsible for the synthesis of proteins in the cell. The chain is Small ribosomal subunit protein uS15 (rps13) from Xenopus laevis (African clawed frog).